The primary structure comprises 320 residues: Protein MRG1 (320 aa).

Positions 1–28 are disordered; that stretch reads MGSSSKEETASDGDTASGGASPSNDGRL. Over residues 12–24 the composition is skewed to polar residues; the sequence is DGDTASGGASPSN. In terms of domain architecture, Tudor-knot spans 30–80; the sequence is SEGERVLAYHGPRVYGAKVQKVELRKKEWKYFVHYLGWNKNWDEWVSADRL. Residues 93 to 104 are compositionally biased toward basic and acidic residues; the sequence is ALDKKQGVEKGT. The tract at residues 93–147 is disordered; the sequence is ALDKKQGVEKGTKSGRSAQTKTRSSADTKADKDDTKTNAAKGKKRKHESGNEKDN. Over residues 106–115 the composition is skewed to polar residues; the sequence is SGRSAQTKTR. The segment covering 116–128 has biased composition (basic and acidic residues); the sequence is SSADTKADKDDTK. The region spanning 150–318 is the MRG domain; it reads AEKLMKIQIP…KVSDGKGKGK (169 aa).

In terms of assembly, interacts with HAM1 and HAM2. Interacts (via MRG domain) with CO. Component of the NuA4 histone acetyltransferase complex. As to expression, ubiquitous. Mainly expressed in the vasculature of cotyledons and leaves, and in roots and inflorescences.

The protein localises to the nucleus. Chromatin remodeling factor. Acts as a 'reader' protein by binding to H3K36me3 and H3K36me3 to control histone H4 acetylation. Increases the transcriptional levels of the flowering time genes FLC and FT. Binds the chromatin at the FT promoter upon interaction with CO. The polypeptide is Protein MRG1 (Arabidopsis thaliana (Mouse-ear cress)).